The sequence spans 498 residues: DEAD-box ATP-dependent RNA helicase 12 (498 aa).

Residues Met-1–Gln-114 are disordered. The segment covering Ser-27 to Gln-65 has biased composition (low complexity). Polar residues predominate over residues Gly-74–Asn-96. The short motif at Asn-124–Glu-152 is the Q motif element. The region spanning Ile-155–Ile-325 is the Helicase ATP-binding domain. Residue Ala-168 to Thr-175 coordinates ATP. A Phosphothreonine modification is found at Thr-230. Residues Asp-273–Asp-276 carry the DEAD box motif. The 161-residue stretch at Gly-335–Ile-495 folds into the Helicase C-terminal domain.

The protein belongs to the DEAD box helicase family. DDX6/DHH1 subfamily.

Its subcellular location is the cytoplasm. The protein resides in the P-body. The catalysed reaction is ATP + H2O = ADP + phosphate + H(+). ATP-dependent RNA helicase involved in mRNA turnover, and more specifically in mRNA decapping. This Arabidopsis thaliana (Mouse-ear cress) protein is DEAD-box ATP-dependent RNA helicase 12 (RH12).